The following is a 313-amino-acid chain: Porphobilinogen deaminase (313 aa).

Cys242 is modified (S-(dipyrrolylmethanemethyl)cysteine).

Belongs to the HMBS family. In terms of assembly, monomer. Dipyrromethane is required as a cofactor.

The catalysed reaction is 4 porphobilinogen + H2O = hydroxymethylbilane + 4 NH4(+). It participates in porphyrin-containing compound metabolism; protoporphyrin-IX biosynthesis; coproporphyrinogen-III from 5-aminolevulinate: step 2/4. Tetrapolymerization of the monopyrrole PBG into the hydroxymethylbilane pre-uroporphyrinogen in several discrete steps. In Yersinia enterocolitica serotype O:8 / biotype 1B (strain NCTC 13174 / 8081), this protein is Porphobilinogen deaminase.